Consider the following 198-residue polypeptide: Recombination protein RecR (198 aa).

The segment at Cys-57 to Cys-72 adopts a C4-type zinc-finger fold. A Toprim domain is found at Ser-80–Pro-175.

The protein belongs to the RecR family.

Its function is as follows. May play a role in DNA repair. It seems to be involved in an RecBC-independent recombinational process of DNA repair. It may act with RecF and RecO. The sequence is that of Recombination protein RecR from Listeria welshimeri serovar 6b (strain ATCC 35897 / DSM 20650 / CCUG 15529 / CIP 8149 / NCTC 11857 / SLCC 5334 / V8).